We begin with the raw amino-acid sequence, 1024 residues long: Beta-galactosidase (1024 aa).

Positions 103 and 202 each coordinate substrate. Na(+) is bound at residue aspartate 202. Glutamate 417, histidine 419, and glutamate 462 together coordinate Mg(2+). Substrate is bound by residues glutamate 462 and glutamate 538–histidine 541. Catalysis depends on glutamate 462, which acts as the Proton donor. The active-site Nucleophile is glutamate 538. Position 598 (asparagine 598) interacts with Mg(2+). Na(+) contacts are provided by phenylalanine 602 and asparagine 605. Residues asparagine 605 and tryptophan 1000 each contribute to the substrate site.

It belongs to the glycosyl hydrolase 2 family. In terms of assembly, homotetramer. Mg(2+) is required as a cofactor. The cofactor is Na(+).

The catalysed reaction is Hydrolysis of terminal non-reducing beta-D-galactose residues in beta-D-galactosides.. This Escherichia coli O9:H4 (strain HS) protein is Beta-galactosidase.